The chain runs to 248 residues: Triosephosphate isomerase (248 aa).

Substrate-binding residues include Asn10 and Lys12. His95 acts as the Electrophile in catalysis. Glu165 serves as the catalytic Proton acceptor.

The protein belongs to the triosephosphate isomerase family. In terms of assembly, homodimer.

The catalysed reaction is D-glyceraldehyde 3-phosphate = dihydroxyacetone phosphate. Its pathway is carbohydrate biosynthesis; gluconeogenesis. The protein operates within carbohydrate degradation; glycolysis; D-glyceraldehyde 3-phosphate from glycerone phosphate: step 1/1. The sequence is that of Triosephosphate isomerase (TPI1) from Kluyveromyces lactis (strain ATCC 8585 / CBS 2359 / DSM 70799 / NBRC 1267 / NRRL Y-1140 / WM37) (Yeast).